The chain runs to 441 residues: Trigger factor (441 aa).

Positions Gly-175–Val-260 constitute a PPIase FKBP-type domain.

The protein belongs to the FKBP-type PPIase family. Tig subfamily.

Its subcellular location is the cytoplasm. The catalysed reaction is [protein]-peptidylproline (omega=180) = [protein]-peptidylproline (omega=0). In terms of biological role, involved in protein export. Acts as a chaperone by maintaining the newly synthesized protein in an open conformation. Functions as a peptidyl-prolyl cis-trans isomerase. In Anaplasma marginale (strain St. Maries), this protein is Trigger factor.